The sequence spans 184 residues: dCTP deaminase (184 aa).

K107–R112 provides a ligand contact to dCTP. Catalysis depends on E133, which acts as the Proton donor/acceptor. Residues Q152, Y166, and Q176 each coordinate dCTP.

Belongs to the dCTP deaminase family. Homotrimer.

The enzyme catalyses dCTP + H2O + H(+) = dUTP + NH4(+). Its pathway is pyrimidine metabolism; dUMP biosynthesis; dUMP from dCTP (dUTP route): step 1/2. Catalyzes the deamination of dCTP to dUTP. The sequence is that of dCTP deaminase from Herpetosiphon aurantiacus (strain ATCC 23779 / DSM 785 / 114-95).